Here is a 305-residue protein sequence, read N- to C-terminus: MVDKLTHLKQLEAESIHIIREVAAEFDNPVMLYSIGKDSAVMLHLARKAFFPGKLPFPVMHVDTRWKFQEMYRFRDKMVEEMGLDLITHINPDGVAQGINPFTHGSAKHTDIMKTEGLKQALDKHGFDAAFGGARRDEEKSRAKERVYSFRDSKHRWDPKNQRPELWNVYNGNVNKGESIRVFPLSNWTELDIWQYIYLEGIPIVPLYFAAERDVIEKNGTLIMIDDERILEHLTDEEKSRIVKKKVRFRTLGCYPLTGAVESEATSLTDIIQEMLLTRTSERQGRVIDHDGAGSMEEKKRQGYF.

Belongs to the PAPS reductase family. CysD subfamily. Heterodimer composed of CysD, the smaller subunit, and CysN.

It carries out the reaction sulfate + ATP + H(+) = adenosine 5'-phosphosulfate + diphosphate. The protein operates within sulfur metabolism; hydrogen sulfide biosynthesis; sulfite from sulfate: step 1/3. In terms of biological role, with CysN forms the ATP sulfurylase (ATPS) that catalyzes the adenylation of sulfate producing adenosine 5'-phosphosulfate (APS) and diphosphate, the first enzymatic step in sulfur assimilation pathway. APS synthesis involves the formation of a high-energy phosphoric-sulfuric acid anhydride bond driven by GTP hydrolysis by CysN coupled to ATP hydrolysis by CysD. This Pseudomonas savastanoi pv. phaseolicola (strain 1448A / Race 6) (Pseudomonas syringae pv. phaseolicola (strain 1448A / Race 6)) protein is Sulfate adenylyltransferase subunit 2.